A 309-amino-acid polypeptide reads, in one-letter code: UDP-N-acetylenolpyruvoylglucosamine reductase (309 aa).

The FAD-binding PCMH-type domain maps to 33–198 (RVGGPAQVLF…TSARFRGTPA (166 aa)). Arg178 is an active-site residue. The active-site Proton donor is the Ser227. The active site involves Glu297.

It belongs to the MurB family. It depends on FAD as a cofactor.

The protein localises to the cytoplasm. It carries out the reaction UDP-N-acetyl-alpha-D-muramate + NADP(+) = UDP-N-acetyl-3-O-(1-carboxyvinyl)-alpha-D-glucosamine + NADPH + H(+). It participates in cell wall biogenesis; peptidoglycan biosynthesis. Functionally, cell wall formation. This is UDP-N-acetylenolpyruvoylglucosamine reductase from Rhodopseudomonas palustris (strain HaA2).